A 172-amino-acid chain; its full sequence is 3-hydroxydecanoyl-[acyl-carrier-protein] dehydratase (172 aa).

H71 is an active-site residue.

The protein belongs to the thioester dehydratase family. FabA subfamily. As to quaternary structure, homodimer.

Its subcellular location is the cytoplasm. The catalysed reaction is a (3R)-hydroxyacyl-[ACP] = a (2E)-enoyl-[ACP] + H2O. It carries out the reaction (3R)-hydroxydecanoyl-[ACP] = (2E)-decenoyl-[ACP] + H2O. The enzyme catalyses (2E)-decenoyl-[ACP] = (3Z)-decenoyl-[ACP]. Its pathway is lipid metabolism; fatty acid biosynthesis. In terms of biological role, necessary for the introduction of cis unsaturation into fatty acids. Catalyzes the dehydration of (3R)-3-hydroxydecanoyl-ACP to E-(2)-decenoyl-ACP and then its isomerization to Z-(3)-decenoyl-ACP. Can catalyze the dehydratase reaction for beta-hydroxyacyl-ACPs with saturated chain lengths up to 16:0, being most active on intermediate chain length. The sequence is that of 3-hydroxydecanoyl-[acyl-carrier-protein] dehydratase from Salmonella choleraesuis (strain SC-B67).